The primary structure comprises 550 residues: Chaperonin GroEL (550 aa).

Residues 29–32 (TAGP), lysine 50, 86–90 (DGTTT), glycine 416, and aspartate 498 contribute to the ATP site.

Belongs to the chaperonin (HSP60) family. Forms a cylinder of 14 subunits composed of two heptameric rings stacked back-to-back. Interacts with the co-chaperonin GroES.

It is found in the cytoplasm. It carries out the reaction ATP + H2O + a folded polypeptide = ADP + phosphate + an unfolded polypeptide.. Functionally, together with its co-chaperonin GroES, plays an essential role in assisting protein folding. The GroEL-GroES system forms a nano-cage that allows encapsulation of the non-native substrate proteins and provides a physical environment optimized to promote and accelerate protein folding. This chain is Chaperonin GroEL, found in Anaplasma phagocytophilum (strain HZ).